The sequence spans 277 residues: Uridine-cytidine kinase 1 (277 aa).

Over residues 1–10 (MASAGGGDCE) the composition is skewed to gly residues. Positions 1–29 (MASAGGGDCEGAGPEADRPHQRPFLIGVS) are disordered. ATP is bound at residue 30–38 (GGTASGKST). Residues aspartate 87, tyrosine 115, histidine 120, arginine 169, arginine 178, and glutamine 186 each coordinate substrate. ATP is bound at residue aspartate 215. Residues 246-277 (RSHKRTFPEPGEHPAVLASGKRSHLESSSRPH) are disordered. Threonine 251 carries the post-translational modification Phosphothreonine. The span at 268-277 (SHLESSSRPH) shows a compositional bias: basic and acidic residues.

This sequence belongs to the uridine kinase family.

It catalyses the reaction uridine + ATP = UMP + ADP + H(+). It carries out the reaction cytidine + ATP = CMP + ADP + H(+). The protein operates within pyrimidine metabolism; CTP biosynthesis via salvage pathway; CTP from cytidine: step 1/3. It participates in pyrimidine metabolism; UMP biosynthesis via salvage pathway; UMP from uridine: step 1/1. Its function is as follows. Phosphorylates uridine and cytidine to uridine monophosphate and cytidine monophosphate. Does not phosphorylate deoxyribonucleosides or purine ribonucleosides. Can use ATP or GTP as a phosphate donor. The polypeptide is Uridine-cytidine kinase 1 (UCK1) (Bos taurus (Bovine)).